Consider the following 96-residue polypeptide: ATP synthase subunit c (96 aa).

The next 2 membrane-spanning stretches (helical) occupy residues 24-44 (HVGA…VGVG) and 75-95 (AIAE…IFVA).

Belongs to the ATPase C chain family. In terms of assembly, F-type ATPases have 2 components, F(1) - the catalytic core - and F(0) - the membrane proton channel. F(1) has five subunits: alpha(3), beta(3), gamma(1), delta(1), epsilon(1). F(0) has three main subunits: a(1), b(2) and c(10-14). The alpha and beta chains form an alternating ring which encloses part of the gamma chain. F(1) is attached to F(0) by a central stalk formed by the gamma and epsilon chains, while a peripheral stalk is formed by the delta and b chains.

It is found in the cell membrane. In terms of biological role, f(1)F(0) ATP synthase produces ATP from ADP in the presence of a proton or sodium gradient. F-type ATPases consist of two structural domains, F(1) containing the extramembraneous catalytic core and F(0) containing the membrane proton channel, linked together by a central stalk and a peripheral stalk. During catalysis, ATP synthesis in the catalytic domain of F(1) is coupled via a rotary mechanism of the central stalk subunits to proton translocation. Its function is as follows. Key component of the F(0) channel; it plays a direct role in translocation across the membrane. A homomeric c-ring of between 10-14 subunits forms the central stalk rotor element with the F(1) delta and epsilon subunits. This is ATP synthase subunit c from Mycoplasmoides gallisepticum (strain R(low / passage 15 / clone 2)) (Mycoplasma gallisepticum).